Here is a 352-residue protein sequence, read N- to C-terminus: Delta(7)-sterol 5(6)-desaturas erg3A (352 aa).

Residue Asn-39 is glycosylated (N-linked (GlcNAc...) asparagine). The next 3 membrane-spanning stretches (helical) occupy residues 82–102, 128–147, and 167–187; these read FLSFFLIVWIFGIIVYFISAT, IAQTMRSMPVMSLLTAPFLV, and YYSILQFPLFIAFTDFCIYWI. The region spanning 174 to 299 is the Fatty acid hydroxylase domain; it reads PLFIAFTDFC…FTTLWDRLGG (126 aa). A Histidine box-1 motif is present at residues 188–192; the sequence is HRGLH. The short motif at 201 to 205 is the Histidine box-2 element; that stretch reads HKPHH. A helical transmembrane segment spans residues 231–251; the sequence is HVFPFIFPLQKLAYVFLFGFI. A Histidine box-3 motif is present at residues 276-280; it reads HTMHH.

Belongs to the sterol desaturase family. The cofactor is Fe cation.

Its subcellular location is the endoplasmic reticulum membrane. Delta(7)-sterol 5(6)-desaturase; part of the third module of ergosterol biosynthesis pathway that includes the late steps of the pathway. Erg3A is a minor delta(7)-sterol 5(6)-desaturase within the ergosterol pathway, erg3B being the major one. The third module or late pathway involves the ergosterol synthesis itself through consecutive reactions that mainly occur in the endoplasmic reticulum (ER) membrane. Firstly, the squalene synthase erg9 catalyzes the condensation of 2 farnesyl pyrophosphate moieties to form squalene, which is the precursor of all steroids. Squalene synthase is crucial for balancing the incorporation of farnesyl diphosphate (FPP) into sterol and nonsterol isoprene synthesis. Secondly, squalene is converted into lanosterol by the consecutive action of the squalene epoxidase erg1 and the lanosterol synthase erg7. Then, the delta(24)-sterol C-methyltransferase erg6 methylates lanosterol at C-24 to produce eburicol. Eburicol is the substrate of the sterol 14-alpha demethylase encoded by cyp51A and cyp51B, to yield 4,4,24-trimethyl ergosta-8,14,24(28)-trienol. The C-14 reductase erg24 then reduces the C14=C15 double bond which leads to 4,4-dimethylfecosterol. A sequence of further demethylations at C-4, involving the C-4 demethylation complex containing the C-4 methylsterol oxidases erg25A or erg25B, the sterol-4-alpha-carboxylate 3-dehydrogenase erg26 and the 3-keto-steroid reductase erg27, leads to the production of fecosterol via 4-methylfecosterol. The C-8 sterol isomerase erg2 then catalyzes the reaction which results in unsaturation at C-7 in the B ring of sterols and thus converts fecosterol to episterol. The sterol-C5-desaturase erg3B then catalyzes the introduction of a C-5 double bond in the B ring to produce 5-dehydroepisterol. The 2 other sterol-C5-desaturases, erg3A and erg3C, seem to be less important in ergosterol biosynthesis. The C-22 sterol desaturase erg5 further converts 5-dehydroepisterol into ergosta-5,7,22,24(28)-tetraen-3beta-ol by forming the C-22(23) double bond in the sterol side chain. Finally, ergosta-5,7,22,24(28)-tetraen-3beta-ol is substrate of the C-24(28) sterol reductases erg4A and erg4B to produce ergosterol. Possible alternative sterol biosynthetic pathways might exist from fecosterol to ergosterol, depending on the activities of the erg3 isoforms. The sequence is that of Delta(7)-sterol 5(6)-desaturas erg3A from Aspergillus fumigatus (strain ATCC MYA-4609 / CBS 101355 / FGSC A1100 / Af293) (Neosartorya fumigata).